Reading from the N-terminus, the 144-residue chain is tRNA-specific adenosine deaminase (144 aa).

Residues 1 to 116 (MEQALKQAGI…SNLRYFNSSV (116 aa)) form the CMP/dCMP-type deaminase domain. Position 48 (His-48) interacts with Zn(2+). The active-site Proton donor is Glu-50. 2 residues coordinate Zn(2+): Cys-78 and Cys-81.

This sequence belongs to the cytidine and deoxycytidylate deaminase family. In terms of assembly, homodimer. It depends on Zn(2+) as a cofactor.

It catalyses the reaction adenosine(34) in tRNA + H2O + H(+) = inosine(34) in tRNA + NH4(+). Its function is as follows. Catalyzes the deamination of adenosine to inosine at the wobble position 34 of tRNA(Arg2). This Rickettsia felis (strain ATCC VR-1525 / URRWXCal2) (Rickettsia azadi) protein is tRNA-specific adenosine deaminase.